Reading from the N-terminus, the 86-residue chain is Putative membrane protein insertion efficiency factor (86 aa).

Residues 67 to 86 form a disordered region; the sequence is LHEGGDDPVPPVKNNDNREH.

This sequence belongs to the UPF0161 family.

The protein localises to the cell inner membrane. Functionally, could be involved in insertion of integral membrane proteins into the membrane. This is Putative membrane protein insertion efficiency factor from Photorhabdus laumondii subsp. laumondii (strain DSM 15139 / CIP 105565 / TT01) (Photorhabdus luminescens subsp. laumondii).